The sequence spans 537 residues: Tegument protein BRRF2 (537 aa).

Disordered regions lie at residues 325-474 (LALP…EAQD) and 486-537 (GLRV…LSVI). Positions 334 to 347 (KPQQTCSQLTSRGN) are enriched in polar residues. A compositionally biased stretch (low complexity) spans 423–441 (SSQAAPSSSSVAPVASLSG). The segment covering 492–517 (DEDEDGSEDGEFSDLDLSDSDHEGDE) has biased composition (acidic residues).

Belongs to the lymphocryptovirus BRRF2 family.

The protein localises to the virion tegument. The protein is Tegument protein BRRF2 of Homo sapiens (Human).